A 37-amino-acid polypeptide reads, in one-letter code: Esculentin-2L (37 aa).

C31 and C37 form a disulfide bridge.

Expressed by the skin glands.

It localises to the secreted. Functionally, antibacterial activity against Gram-positive bacterium S.aureus and Gram-negative bacterium E.coli. Has activity against C.albicans. This is Esculentin-2L from Rana luteiventris (Columbia spotted frog).